The primary structure comprises 90 residues: U7-theraphotoxin-Hhn1a 8 (90 aa).

The N-terminal stretch at Met1–Ser19 is a signal peptide. Positions Phe20 to Glu50 are excised as a propeptide. Cystine bridges form between Cys51–Cys65, Cys58–Cys70, and Cys64–Cys81.

Belongs to the neurotoxin 10 (Hwtx-1) family. 13 (Hntx-13) subfamily. Expressed by the venom gland.

The protein resides in the secreted. Functionally, ion channel inhibitor. This chain is U7-theraphotoxin-Hhn1a 8, found in Cyriopagopus hainanus (Chinese bird spider).